The sequence spans 508 residues: Chromosomal replication initiator protein DnaA (508 aa).

A domain I, interacts with DnaA modulators region spans residues 1-91 (MADDPGSSFT…TDALSRRLGQ (91 aa)). Positions 91–167 (QQIQLGVRIA…AIDPAVAAGT (77 aa)) are domain II. Positions 104–152 (DDVEDALIPSAEPFPDTDADLSARRRTDSRASGERGAVTNTQPGWTNYF) are disordered. Residues 124 to 136 (LSARRRTDSRASG) are compositionally biased toward basic and acidic residues. A compositionally biased stretch (polar residues) spans 141–152 (VTNTQPGWTNYF). A domain III, AAA+ region region spans residues 168–384 (SLNRRYTFDT…GALIRVTAFA (217 aa)). Gly212, Gly214, Lys215, and Thr216 together coordinate ATP. Residues 385 to 508 (SLNKTPIDKS…TTRIRQRSKR (124 aa)) form a domain IV, binds dsDNA region.

This sequence belongs to the DnaA family. As to quaternary structure, oligomerizes as a right-handed, spiral filament on DNA at oriC.

The protein resides in the cytoplasm. Functionally, plays an essential role in the initiation and regulation of chromosomal replication. ATP-DnaA binds to the origin of replication (oriC) to initiate formation of the DNA replication initiation complex once per cell cycle. Binds the DnaA box (a 9 base pair repeat at the origin) and separates the double-stranded (ds)DNA. Forms a right-handed helical filament on oriC DNA; dsDNA binds to the exterior of the filament while single-stranded (ss)DNA is stabiized in the filament's interior. The ATP-DnaA-oriC complex binds and stabilizes one strand of the AT-rich DNA unwinding element (DUE), permitting loading of DNA polymerase. After initiation quickly degrades to an ADP-DnaA complex that is not apt for DNA replication. Binds acidic phospholipids. In Mycobacterium avium, this protein is Chromosomal replication initiator protein DnaA.